The primary structure comprises 506 residues: Abscisic acid 8'-hydroxylase 2 (506 aa).

A helical membrane pass occupies residues 3 to 23 (FLLFFVFVTAAVLCFVVPAFL). A heme-binding site is contributed by Cys-437.

Belongs to the cytochrome P450 family. Heme serves as cofactor. In terms of tissue distribution, in internodes and expanding leaves. Weak expression in seedlings.

It is found in the membrane. The enzyme catalyses 2-cis-(+)-abscisate + reduced [NADPH--hemoprotein reductase] + O2 = (+)-8'-hydroxyabscisate + oxidized [NADPH--hemoprotein reductase] + H2O + H(+). The protein operates within plant hormone degradation; abscisic acid degradation. Functionally, involved in the oxidative degradation of abscisic acid. The sequence is that of Abscisic acid 8'-hydroxylase 2 (CYP707A6) from Oryza sativa subsp. indica (Rice).